A 244-amino-acid chain; its full sequence is MRDRISAFLEEKQGLSVNSKQSYKYDLEQFLDMVGERISETSLKIYQAQLANLKISAQKRKISACNQFLYFLYQKGEVDSFYRLELAKQAEKKTEKPEILYLDSFWQESDHPEGRLLALLILEMGLLPSEILAIKVADINLDFQVLRISKASQQRIVTIPTALLSELEPLMGQTYLFERGEKPYSRQWAFRQLESFVKEKGFPSLSAQVLREQFILRQIENKVDLYEIAKKLGLKTVLTLEKYR.

Positions 1–73 (MRDRISAFLE…ACNQFLYFLY (73 aa)) constitute a Core-binding (CB) domain. The Tyr recombinase domain maps to 90–244 (AEKKTEKPEI…KTVLTLEKYR (155 aa)). Active-site residues include Lys-150 and Arg-211. Tyr-243 acts as the O-(3'-phospho-DNA)-tyrosine intermediate in catalysis.

Belongs to the 'phage' integrase family. XerD-like subfamily.

The protein localises to the cytoplasm. In terms of biological role, putative tyrosine recombinase. Not involved in the cutting and rejoining of the recombining DNA molecules on dif(SL) site. This is Tyrosine recombinase XerD-like from Streptococcus pneumoniae serotype 2 (strain D39 / NCTC 7466).